The primary structure comprises 324 residues: dITP/XTP pyrophosphatase (324 aa).

The segment at 1–126 (MTKSIFEYKD…SDNKSDFGDV (126 aa)) is unknown. An NTP pyrophosphatase region spans residues 127 to 324 (LLIATRNEGK…EVFPAWQNKQ (198 aa)). 131-136 (TRNEGK) contacts substrate. D193 acts as the Proton acceptor in catalysis. Position 193 (D193) interacts with Mg(2+). Substrate contacts are provided by residues S194, 277 to 280 (FGYD), K300, and 305 to 306 (HR).

Belongs to the HAM1 NTPase family. In terms of assembly, homodimer. Mg(2+) serves as cofactor.

The enzyme catalyses XTP + H2O = XMP + diphosphate + H(+). It carries out the reaction dITP + H2O = dIMP + diphosphate + H(+). The catalysed reaction is ITP + H2O = IMP + diphosphate + H(+). Pyrophosphatase that catalyzes the hydrolysis of nucleoside triphosphates to their monophosphate derivatives, with a high preference for the non-canonical purine nucleotides XTP (xanthosine triphosphate), dITP (deoxyinosine triphosphate) and ITP. Seems to function as a house-cleaning enzyme that removes non-canonical purine nucleotides from the nucleotide pool, thus preventing their incorporation into DNA/RNA and avoiding chromosomal lesions. The sequence is that of dITP/XTP pyrophosphatase from Streptococcus thermophilus (strain CNRZ 1066).